Consider the following 445-residue polypeptide: Tubulin beta-3 chain (445 aa).

Gln-11, Glu-69, Ser-138, Gly-142, Thr-143, Gly-144, Asn-204, and Asn-226 together coordinate GTP. Glu-69 serves as a coordination point for Mg(2+). A compositionally biased stretch (polar residues) spans 417 to 426; the sequence is DLVSEYQQYQ. The tract at residues 417–445 is disordered; the sequence is DLVSEYQQYQEASADDEADEFDEEEGDEE. Over residues 429–445 the composition is skewed to acidic residues; sequence SADDEADEFDEEEGDEE.

This sequence belongs to the tubulin family. Dimer of alpha and beta chains. A typical microtubule is a hollow water-filled tube with an outer diameter of 25 nm and an inner diameter of 15 nM. Alpha-beta heterodimers associate head-to-tail to form protofilaments running lengthwise along the microtubule wall with the beta-tubulin subunit facing the microtubule plus end conferring a structural polarity. Microtubules usually have 13 protofilaments but different protofilament numbers can be found in some organisms and specialized cells. Requires Mg(2+) as cofactor.

Its subcellular location is the cytoplasm. It is found in the cytoskeleton. Functionally, tubulin is the major constituent of microtubules, a cylinder consisting of laterally associated linear protofilaments composed of alpha- and beta-tubulin heterodimers. Microtubules grow by the addition of GTP-tubulin dimers to the microtubule end, where a stabilizing cap forms. Below the cap, tubulin dimers are in GDP-bound state, owing to GTPase activity of alpha-tubulin. The chain is Tubulin beta-3 chain (TUBB3) from Oomycete-like sp. (strain MacKay2000).